Consider the following 480-residue polypeptide: Porphobilinogen deaminase, chloroplastic (480 aa).

A chloroplast-targeting transit peptide spans 1 to 139 (MYCGRYETIG…VSGGRIWSLA (139 aa)). C395 carries the S-(dipyrrolylmethanemethyl)cysteine modification.

Belongs to the HMBS family. The cofactor is dipyrromethane.

It is found in the plastid. It localises to the chloroplast. It catalyses the reaction 4 porphobilinogen + H2O = hydroxymethylbilane + 4 NH4(+). Its pathway is porphyrin-containing compound metabolism; protoporphyrin-IX biosynthesis; coproporphyrinogen-III from 5-aminolevulinate: step 2/4. It participates in porphyrin-containing compound metabolism; chlorophyll biosynthesis. In terms of biological role, tetrapolymerization of the monopyrrole PBG into the hydroxymethylbilane pre-uroporphyrinogen in several discrete steps. The protein is Porphobilinogen deaminase, chloroplastic of Euglena gracilis.